The sequence spans 704 residues: MPRNTALEKYRNIGICAHVDAGKTTTTERILFYTGLSHKIGEVHDGAATMDWMEQEQERGITITSAATTTFWSGMDQQFEKHRINIIDTPGHVDFTIEVERSLRVLDGAVVVFCGSSGVEPQSETVWRQANKYGVPRIVFVNKMDRSGADFERVCAQIKTRLKANVVPVQLNIGAEEDFKGVIDLIRMKAIMWNEEDMGLTYELVDIPADLQDRAEELRMEMIEAAAEASEELMEKYLEGGELSEDEIHQGLRARVLNNEIVLAFCGSAFKNKGVQAVLDGVVRYLPAPNQVPAIKCETEDGEPASRPSSDDAPFAALAFKLATDLFVGNLTFIRVYSGVLKSGDAVYNPVKGKKERVGRIVQMHANKRDEIKEVRAGDIAACIGLKDVTTGDTLCDQEDVVILEKMDFPEPVISVAVEPKSKADQEKMSIALGKLAAEDPSFRVKTDEESGQTIISGMGELHLDIIVDRMRREFKVEANVGNPQVAYRETIRSKVEQEAKFVRQSGGRGQYGHVFVRFEPLDEVDENGEAKVFKFVDEVVGGVVPKEYIGSVAKGIEEQLNNGVLAGYPMIGVKATLYDGSYHDVDSSEMAFKIAGSMALKEGAKKANACILEPIMKVEVVTPEDYLGDVMGDLNRRRGIIEGMDENPSGRVINALVPLAEMFGYATNVRSISQGRASFSMEFKKYAEVPNNIADEIIKSRNS.

The tr-type G domain maps to 8 to 290 (EKYRNIGICA…GVVRYLPAPN (283 aa)). GTP contacts are provided by residues 17-24 (AHVDAGKT), 88-92 (DTPGH), and 142-145 (NKMD).

It belongs to the TRAFAC class translation factor GTPase superfamily. Classic translation factor GTPase family. EF-G/EF-2 subfamily.

The protein resides in the cytoplasm. Its function is as follows. Catalyzes the GTP-dependent ribosomal translocation step during translation elongation. During this step, the ribosome changes from the pre-translocational (PRE) to the post-translocational (POST) state as the newly formed A-site-bound peptidyl-tRNA and P-site-bound deacylated tRNA move to the P and E sites, respectively. Catalyzes the coordinated movement of the two tRNA molecules, the mRNA and conformational changes in the ribosome. The chain is Elongation factor G from Francisella tularensis subsp. holarctica (strain FTNF002-00 / FTA).